A 251-amino-acid polypeptide reads, in one-letter code: Probable transcriptional regulatory protein cbdbA400 (251 aa).

This sequence belongs to the TACO1 family.

Its subcellular location is the cytoplasm. This Dehalococcoides mccartyi (strain CBDB1) protein is Probable transcriptional regulatory protein cbdbA400.